Here is a 235-residue protein sequence, read N- to C-terminus: Large ribosomal subunit protein uL1 (235 aa).

Belongs to the universal ribosomal protein uL1 family. In terms of assembly, part of the 50S ribosomal subunit.

Binds directly to 23S rRNA. The L1 stalk is quite mobile in the ribosome, and is involved in E site tRNA release. Functionally, protein L1 is also a translational repressor protein, it controls the translation of the L11 operon by binding to its mRNA. The protein is Large ribosomal subunit protein uL1 of Paenarthrobacter aurescens (strain TC1).